Reading from the N-terminus, the 425-residue chain is Serine--tRNA ligase (425 aa).

233–235 (TAE) contributes to the L-serine binding site. 264–266 (RRE) is a binding site for ATP. Glu287 is a binding site for L-serine. 351-354 (EVSS) contributes to the ATP binding site. Ser386 serves as a coordination point for L-serine.

The protein belongs to the class-II aminoacyl-tRNA synthetase family. Type-1 seryl-tRNA synthetase subfamily. Homodimer. The tRNA molecule binds across the dimer.

The protein resides in the cytoplasm. The catalysed reaction is tRNA(Ser) + L-serine + ATP = L-seryl-tRNA(Ser) + AMP + diphosphate + H(+). It carries out the reaction tRNA(Sec) + L-serine + ATP = L-seryl-tRNA(Sec) + AMP + diphosphate + H(+). It functions in the pathway aminoacyl-tRNA biosynthesis; selenocysteinyl-tRNA(Sec) biosynthesis; L-seryl-tRNA(Sec) from L-serine and tRNA(Sec): step 1/1. Catalyzes the attachment of serine to tRNA(Ser). Is also able to aminoacylate tRNA(Sec) with serine, to form the misacylated tRNA L-seryl-tRNA(Sec), which will be further converted into selenocysteinyl-tRNA(Sec). The chain is Serine--tRNA ligase from Thermosipho melanesiensis (strain DSM 12029 / CIP 104789 / BI429).